The sequence spans 85 residues: Large ribosomal subunit protein bL27 (85 aa).

The tract at residues 1–22 (MAHKKAGGSTNNGRDSESKRLG) is disordered.

The protein belongs to the bacterial ribosomal protein bL27 family.

This chain is Large ribosomal subunit protein bL27, found in Photobacterium profundum (strain SS9).